The primary structure comprises 537 residues: Glucose-6-phosphate isomerase (537 aa).

Glu355 acts as the Proton donor in catalysis. Active-site residues include His386 and Lys501.

The protein belongs to the GPI family.

It is found in the cytoplasm. The enzyme catalyses alpha-D-glucose 6-phosphate = beta-D-fructose 6-phosphate. The protein operates within carbohydrate biosynthesis; gluconeogenesis. Its pathway is carbohydrate degradation; glycolysis; D-glyceraldehyde 3-phosphate and glycerone phosphate from D-glucose: step 2/4. Catalyzes the reversible isomerization of glucose-6-phosphate to fructose-6-phosphate. The polypeptide is Glucose-6-phosphate isomerase (Protochlamydia amoebophila (strain UWE25)).